The following is a 215-amino-acid chain: Casparian strip membrane protein 3 (215 aa).

The segment at 1–26 (MDSEKTGEAKITIQEPKAADPKGKGI) is disordered. At 1-55 (MDSEKTGEAKITIQEPKAADPKGKGIADAPPPPVVVTTAKAIQKLPRGGWKKGVA) the chain is on the cytoplasmic side. The helical transmembrane segment at 56–76 (IFDFVVRLCAIATGLAATGIM) threads the bilayer. The Extracellular portion of the chain corresponds to 77-101 (GTTEQTLPFFTQFFQFHAEYNDLPT). Residues 102 to 122 (FMFFVFANGIASGYLILSLPF) traverse the membrane as a helical segment. Over 123–136 (SIVCIVRPLAIVPR) the chain is Cytoplasmic. A helical transmembrane segment spans residues 137–157 (LLLIIFDTVVMALTIAAASAA). Over 158 to 189 (AAIVYLAHNGNSNANWNAICQQFNDFCQQTST) the chain is Extracellular. Residues 190–210 (AVVASFITAAMLTFLIVLSAF) traverse the membrane as a helical segment. The Cytoplasmic portion of the chain corresponds to 211–215 (ALKRN).

The protein belongs to the Casparian strip membrane proteins (CASP) family. Homodimer and heterodimers.

The protein resides in the cell membrane. Regulates membrane-cell wall junctions and localized cell wall deposition. Required for establishment of the Casparian strip membrane domain (CSD) and the subsequent formation of Casparian strips, a cell wall modification of the root endodermis that determines an apoplastic barrier between the intraorganismal apoplasm and the extraorganismal apoplasm and prevents lateral diffusion. The protein is Casparian strip membrane protein 3 of Ricinus communis (Castor bean).